The following is a 156-amino-acid chain: MTHRRLLWALCVAALLGVVAAQAGDQQQMQPNEADALRKKWSAVEVVRDLGHIKKDLAKMIELEGAGALSQDELYFYYFRMHDFDNNNKLDGQEMMAAMFHTNHHEEDDEHDGKVPLIIPEQDIASYVDSVLRADKNQDGFISYPELRTSDLTNQI.

Positions 1-21 (MTHRRLLWALCVAALLGVVAA) are cleaved as a signal peptide. 2 consecutive EF-hand domains span residues 70-105 (SQDE…TNHH) and 123-156 (DIAS…TNQI). Residues aspartate 83, aspartate 85, asparagine 87, lysine 89, glutamate 94, aspartate 135, asparagine 137, aspartate 139, phenylalanine 141, and glutamate 146 each coordinate Ca(2+).

Interacts with host fibrin. Interacts with human RAGE/AGER. In terms of tissue distribution, saliva (at protein level). Salivary gland (at protein level). Not detected in midgut, ovary, trachea, Malpighian tubule system, synganglion and cuticle.

The protein resides in the secreted. Its subcellular location is the cytoplasm. With respect to regulation, resistant to inhibition by host SERPINE1. Inhibited by PMSF, aprotinin, antipain and leupeptin. Inhibited by Zn(2+). Functionally, anticoagulant and fibrinolytic protease that modulates blood feeding of ticks on vertebrate hosts. Degrades host fibrinogen and delays fibrin clot formation. Promotes lysis of fibrin clots in the host by activating host plasminogen in the presence of soluble fibrin. Binds Ca(2+). Hydrolyzes serine protease-specific substrates. Required for the formation of a blood pool, an accumulation of blood and tissue fluid developed at the tick's feeding site. Blocks activation of host AGER/RAGE. Reduces AGER/RAGE-dependent production of reactive oxygen species (ROS) in human endothelial cells. Prevents AGER/RAGE-dependent activation of NF-kappa-B and suppresses expression of adhesion molecules, such as VCAM1, ICAM1 and SELE, and secretion of cytokines, such as CSF3/GCSF and TGF-beta, in human endothelial cells. Suppresses RAGE/AGER-mediated migration of mouse peritoneal resident cells. Reduces AGER/RAGE-mediated inflammation in mice tissues. The chain is Longistatin from Haemaphysalis longicornis (Bush tick).